The following is a 381-amino-acid chain: cAMP-dependent protein kinase type I-alpha regulatory subunit (381 aa).

M1 carries the post-translational modification N-acetylmethionine. A2 is modified (N-acetylalanine; in cAMP-dependent protein kinase type I-alpha regulatory subunit, N-terminally processed). Residues 2 to 136 (ASGSMATSEE…ALAKAIEKNV (135 aa)) form a dimerization and phosphorylation region. S3 is modified (phosphoserine). The interval 73–96 (IRTDSREDEISPPPPNPVVKGRRR) is disordered. Phosphothreonine is present on T75. Phosphoserine occurs at positions 77 and 83. The short motif at 96 to 100 (RRGAI) is the Pseudophosphorylation motif element. S101 is subject to Phosphoserine. 3',5'-cyclic AMP is bound by residues 137 to 254 (LFSH…SKVS), E202, R211, 255 to 381 (ILES…SLSV), E326, and R335. At S258 the chain carries Phosphoserine.

It belongs to the cAMP-dependent kinase regulatory chain family. In terms of assembly, the inactive holoenzyme is composed of two regulatory chains and two catalytic chains. Activation by cAMP releases the two active catalytic monomers and the regulatory dimer. Interacts with PRKACA and PRKACB. PRKAR1A also interacts with RFC2; the complex may be involved in cell survival. Interacts with AKAP4. Interacts with RARA; the interaction occurs in the presence of cAMP or FSH and regulates RARA transcriptional activity. Interacts with the phosphorylated form of PJA2. Interacts with PRKX; regulates this cAMP-dependent protein kinase. Interacts with CBFA2T3. Interacts with smAKAP; this interaction may target PRKAR1A to the plasma membrane. Interacts with AICDA. Post-translationally, the pseudophosphorylation site binds to the substrate-binding region of the catalytic chain, resulting in the inhibition of its activity.

It localises to the cell membrane. Its function is as follows. Regulatory subunit of the cAMP-dependent protein kinases involved in cAMP signaling in cells. This is cAMP-dependent protein kinase type I-alpha regulatory subunit (Prkar1a) from Mus musculus (Mouse).